We begin with the raw amino-acid sequence, 274 residues long: Bis(5'-nucleosyl)-tetraphosphatase, symmetrical (274 aa).

Belongs to the Ap4A hydrolase family.

It carries out the reaction P(1),P(4)-bis(5'-adenosyl) tetraphosphate + H2O = 2 ADP + 2 H(+). Hydrolyzes diadenosine 5',5'''-P1,P4-tetraphosphate to yield ADP. The polypeptide is Bis(5'-nucleosyl)-tetraphosphatase, symmetrical (Janthinobacterium sp. (strain Marseille) (Minibacterium massiliensis)).